Here is a 239-residue protein sequence, read N- to C-terminus: MGNSALRAHVETAQKTGVFQLKDRGLTEFPSELQKLTSNLRTIDLSNNKIDSLPPLIIGKFTLLKSLSLNNNKLTVLPDELCNLKKLETLSLNNNHLRELPSTFGQLSALKTLSLSGNQLGALPPQLCCLRHLDVVDLSKNQIRSIPDTVGELQAIELNLNQNQISQLSVKISCCPRLKVLRLEENCLELSMLPQSILSDSQICLLAVEGNLFEIKKFRELEGYDKYMERFTATKKKFA.

Gly2 carries the N-myristoyl glycine lipid modification. LRR repeat units follow at residues 39-60 (NLRTIDLSNNKIDSLPPLIIGK), 63-85 (LLKSLSLNNNKLTVLPDELCNLK), 86-107 (KLETLSLNNNHLRELPSTFGQL), 109-130 (ALKTLSLSGNQLGALPPQLCCL), 132-153 (HLDVVDLSKNQIRSIPDTVGEL), 154-175 (QAIELNLNQNQISQLSVKISCC), 177-197 (RLKVLRLEENCLELSMLPQSI), and 202-222 (QICLLAVEGNLFEIKKFRELE).

The protein localises to the membrane. The polypeptide is Leucine-rich repeat-containing protein 57 (Lrrc57) (Mus musculus (Mouse)).